The chain runs to 372 residues: Lysophosphatidic acid receptor 5 (372 aa).

Over M1–L26 the chain is Extracellular. 2 N-linked (GlcNAc...) asparagine glycosylation sites follow: N4 and N9. Residues V27 to F47 form a helical membrane-spanning segment. Over L48–S55 the chain is Cytoplasmic. A helical membrane pass occupies residues V56 to P76. The Extracellular portion of the chain corresponds to V77–T96. A disulfide bridge connects residues C94 and C175. Residues T97–V117 form a helical membrane-spanning segment. The Cytoplasmic portion of the chain corresponds to D118 to R136. The helical transmembrane segment at V137 to A157 threads the bilayer. Residues R158–R187 lie on the Extracellular side of the membrane. Residues L188 to V208 traverse the membrane as a helical segment. Residues Y209–N239 lie on the Cytoplasmic side of the membrane. A helical membrane pass occupies residues L240–L260. The Extracellular segment spans residues R261–R276. The helical transmembrane segment at G277–Y297 threads the bilayer. Residues Y298–L372 lie on the Cytoplasmic side of the membrane. The tract at residues G312–L372 is disordered. Polar residues-rich tracts occupy residues S332–A341 and S357–L372.

The protein belongs to the G-protein coupled receptor 1 family. As to expression, not expressed in frontal cortex, basal forebrain, caudate putamen, thalamus, or hippocampus.

It localises to the cell membrane. Functionally, receptor for lysophosphatidic acid (LPA), a mediator of diverse cellular activities. This chain is Lysophosphatidic acid receptor 5 (LPAR5), found in Homo sapiens (Human).